Here is a 373-residue protein sequence, read N- to C-terminus: UDP-N-acetylenolpyruvoylglucosamine reductase (373 aa).

Positions 30-203 (LACTANSVVT…SRVGFRLHTD (174 aa)) constitute an FAD-binding PCMH-type domain. The active site involves Arg180. Ser258 serves as the catalytic Proton donor. Glu356 is an active-site residue.

It belongs to the MurB family. FAD serves as cofactor.

The protein localises to the cytoplasm. The catalysed reaction is UDP-N-acetyl-alpha-D-muramate + NADP(+) = UDP-N-acetyl-3-O-(1-carboxyvinyl)-alpha-D-glucosamine + NADPH + H(+). Its pathway is cell wall biogenesis; peptidoglycan biosynthesis. Functionally, cell wall formation. In Psychrobacter arcticus (strain DSM 17307 / VKM B-2377 / 273-4), this protein is UDP-N-acetylenolpyruvoylglucosamine reductase.